The following is an 81-amino-acid chain: Photosystem I iron-sulfur center (81 aa).

4Fe-4S ferredoxin-type domains follow at residues 2–31 and 39–68; these read AHSV…MIPW and IASA…VRVY. [4Fe-4S] cluster is bound by residues Cys11, Cys14, Cys17, Cys21, Cys48, Cys51, Cys54, and Cys58.

The eukaryotic PSI reaction center is composed of at least 11 subunits. It depends on [4Fe-4S] cluster as a cofactor.

The protein localises to the plastid. It localises to the chloroplast thylakoid membrane. It carries out the reaction reduced [plastocyanin] + hnu + oxidized [2Fe-2S]-[ferredoxin] = oxidized [plastocyanin] + reduced [2Fe-2S]-[ferredoxin]. In terms of biological role, apoprotein for the two 4Fe-4S centers FA and FB of photosystem I (PSI); essential for photochemical activity. FB is the terminal electron acceptor of PSI, donating electrons to ferredoxin. The C-terminus interacts with PsaA/B/D and helps assemble the protein into the PSI complex. Required for binding of PsaD and PsaE to PSI. PSI is a plastocyanin-ferredoxin oxidoreductase, converting photonic excitation into a charge separation, which transfers an electron from the donor P700 chlorophyll pair to the spectroscopically characterized acceptors A0, A1, FX, FA and FB in turn. The sequence is that of Photosystem I iron-sulfur center from Psilotum nudum (Whisk fern).